The following is a 588-amino-acid chain: Adenylate kinase 5, chloroplastic (588 aa).

Positions 1 to 34 (MASLSLSSAHFSSTSSSSRSSISTSSLSPSSTSL) are disordered. A chloroplast-targeting transit peptide spans 1 to 73 (MASLSLSSAH…SFSTSNSQIR (73 aa)). Position 89–94 (89–94 (ASGKGT)) interacts with ATP. Residues 109 to 138 (STGDLLRAEVSSGTDIGKRAKEFMNSGSLV) are NMP. AMP is bound by residues R115, 136–138 (SLV), 165–168 (GFPR), and Q172. The segment at 202-235 (GRRLDPVTGKIYHIKNYPPESDEIKARLVTRPDD) is LID. An ATP-binding site is contributed by R203. 2 residues coordinate AMP: R232 and R243.

This sequence belongs to the adenylate kinase family. As to quaternary structure, monomer.

It is found in the plastid. The protein resides in the chloroplast. The catalysed reaction is AMP + ATP = 2 ADP. Its function is as follows. Catalyzes the reversible transfer of the terminal phosphate group between ATP and AMP. The chain is Adenylate kinase 5, chloroplastic from Arabidopsis thaliana (Mouse-ear cress).